We begin with the raw amino-acid sequence, 235 residues long: Small ribosomal subunit protein uS2 (235 aa).

The protein belongs to the universal ribosomal protein uS2 family.

The chain is Small ribosomal subunit protein uS2 from Thermoanaerobacter pseudethanolicus (strain ATCC 33223 / 39E) (Clostridium thermohydrosulfuricum).